Reading from the N-terminus, the 94-residue chain is Cell division topological specificity factor (94 aa).

This sequence belongs to the MinE family.

Functionally, prevents the cell division inhibition by proteins MinC and MinD at internal division sites while permitting inhibition at polar sites. This ensures cell division at the proper site by restricting the formation of a division septum at the midpoint of the long axis of the cell. The protein is Cell division topological specificity factor of Hamiltonella defensa subsp. Acyrthosiphon pisum (strain 5AT).